The primary structure comprises 91 residues: UPF0358 protein Sca_0738 (91 aa).

The protein belongs to the UPF0358 family.

The polypeptide is UPF0358 protein Sca_0738 (Staphylococcus carnosus (strain TM300)).